The sequence spans 504 residues: Flavin-dependent halogenase armH3 (504 aa).

FAD contacts are provided by Gly-16, Ala-19, Glu-49, and Ala-149. Chloride is bound by residues Ser-329 and Gly-330. Ile-331 contacts FAD. A disordered region spans residues 444-475 (NNLRTPVDTGAADVKAKHAPSETDAQNPLQSM).

This sequence belongs to the flavin-dependent halogenase family.

It catalyses the reaction melleolide F + FADH2 + chloride + O2 = 6'-chloromelleolide F + FAD + 2 H2O + H(+). In terms of biological role, flavin-dependent halogenase involved in the biosynthesis of melleolides, a range of antifungal and phytotoxic polyketide derivatives composed of an orsellinic acid (OA) moiety esterified to various sesquiterpene alcohols. The halogenase catalyzes the transfer of a single chlorine atom to the melleolide backbone, resulting in a 6'-chloromelleolide product. The enzyme acts on free substrate and does not depend on carrier-protein-dependent acceptor molecules. In Armillaria mellea (Honey mushroom), this protein is Flavin-dependent halogenase armH3.